Reading from the N-terminus, the 258-residue chain is Undecaprenyl-diphosphatase (258 aa).

8 consecutive transmembrane segments (helical) span residues 1–21 (MDFL…FLPV), 42–62 (LKCF…FMFF), 69–89 (FNLW…GFLA), 96–116 (FFEP…FIVV), 135–155 (VSFK…IPGT), 173–193 (EVAA…ATAY), 211–231 (IFLV…KLFL), and 237–257 (FSYI…LIYI).

This sequence belongs to the UppP family.

Its subcellular location is the cell inner membrane. It catalyses the reaction di-trans,octa-cis-undecaprenyl diphosphate + H2O = di-trans,octa-cis-undecaprenyl phosphate + phosphate + H(+). Catalyzes the dephosphorylation of undecaprenyl diphosphate (UPP). Confers resistance to bacitracin. The polypeptide is Undecaprenyl-diphosphatase (Campylobacter fetus subsp. fetus (strain 82-40)).